The sequence spans 401 residues: Imidazolonepropionase (401 aa).

Residues His66 and His68 each contribute to the Fe(3+) site. His66 and His68 together coordinate Zn(2+). Arg75, Tyr138, and His171 together coordinate 4-imidazolone-5-propanoate. Tyr138 is an N-formimidoyl-L-glutamate binding site. Fe(3+) is bound at residue His236. His236 serves as a coordination point for Zn(2+). Gln239 is a binding site for 4-imidazolone-5-propanoate. Asp311 is a Fe(3+) binding site. Residue Asp311 participates in Zn(2+) binding. Positions 313 and 315 each coordinate N-formimidoyl-L-glutamate. Residue Thr316 coordinates 4-imidazolone-5-propanoate.

Belongs to the metallo-dependent hydrolases superfamily. HutI family. Requires Zn(2+) as cofactor. It depends on Fe(3+) as a cofactor.

It is found in the cytoplasm. The enzyme catalyses 4-imidazolone-5-propanoate + H2O = N-formimidoyl-L-glutamate. It participates in amino-acid degradation; L-histidine degradation into L-glutamate; N-formimidoyl-L-glutamate from L-histidine: step 3/3. Catalyzes the hydrolytic cleavage of the carbon-nitrogen bond in imidazolone-5-propanoate to yield N-formimidoyl-L-glutamate. It is the third step in the universal histidine degradation pathway. In Pseudomonas fluorescens (strain Pf0-1), this protein is Imidazolonepropionase.